A 541-amino-acid chain; its full sequence is Zinc finger protein 329 (541 aa).

S50 is subject to Phosphoserine. 12 C2H2-type zinc fingers span residues 203-225 (YRCTECGKCFKRNSSLVLHHRTH), 231-253 (YTCNECGKSFSKNYNLIVHQRIH), 259-281 (YECSKCGKAFSDGSALTQHQRIH), 287-309 (YECLECGKTFNRNSSLILHQRTH), 315-337 (YRCNECGKPFTDISHLTVHLRIH), 343-365 (YECSKCGKAFRDGSYLTQHERTH), 371-393 (FECAECGKSFNRNSHLIVHQKIH), 399-421 (YECKECGKTFIESAYLIRHQRIH), 427-449 (YGCNQCQKLFRNIAGLIRHQRTH), 455-477 (YECNQCGKAFRDSSCLTKHQRIH), 483-505 (YQCPECGKSFKQNSHLAVHQRLH), and 511-533 (SRCPQCGKMFQKSSSLVRHQRAH).

The protein belongs to the krueppel C2H2-type zinc-finger protein family.

The protein localises to the nucleus. Its function is as follows. May be involved in transcriptional regulation. The protein is Zinc finger protein 329 (ZNF329) of Homo sapiens (Human).